The sequence spans 119 residues: Ribonuclease P protein component (119 aa).

The disordered stretch occupies residues M1 to K20.

The protein belongs to the RnpA family. Consists of a catalytic RNA component (M1 or rnpB) and a protein subunit.

It catalyses the reaction Endonucleolytic cleavage of RNA, removing 5'-extranucleotides from tRNA precursor.. RNaseP catalyzes the removal of the 5'-leader sequence from pre-tRNA to produce the mature 5'-terminus. It can also cleave other RNA substrates such as 4.5S RNA. The protein component plays an auxiliary but essential role in vivo by binding to the 5'-leader sequence and broadening the substrate specificity of the ribozyme. In Mycolicibacterium vanbaalenii (strain DSM 7251 / JCM 13017 / BCRC 16820 / KCTC 9966 / NRRL B-24157 / PYR-1) (Mycobacterium vanbaalenii), this protein is Ribonuclease P protein component.